A 286-amino-acid chain; its full sequence is Meiotically up-regulated gene 64 protein (286 aa).

Its subcellular location is the cytoplasm. Its function is as follows. Has a role in meiosis. This chain is Meiotically up-regulated gene 64 protein (mug64), found in Schizosaccharomyces pombe (strain 972 / ATCC 24843) (Fission yeast).